The primary structure comprises 658 residues: UvrABC system protein B (658 aa).

Positions 26–413 (EGINSGKKKQ…SPEVIEQIIR (388 aa)) constitute a Helicase ATP-binding domain. 39 to 46 (GATGTGKT) contacts ATP. Residues 92-115 (YYDYYQPEAYVPQTDTFIEKDAQI) carry the Beta-hairpin motif. The Helicase C-terminal domain occupies 430–596 (QIDDLLGEIQ…TIQKGVRDVI (167 aa)). In terms of domain architecture, UVR spans 622 to 657 (EKTIAKMEAEMKEAAKALDFERAAELRDLLLELKAE).

This sequence belongs to the UvrB family. As to quaternary structure, forms a heterotetramer with UvrA during the search for lesions. Interacts with UvrC in an incision complex.

The protein localises to the cytoplasm. Its function is as follows. The UvrABC repair system catalyzes the recognition and processing of DNA lesions. A damage recognition complex composed of 2 UvrA and 2 UvrB subunits scans DNA for abnormalities. Upon binding of the UvrA(2)B(2) complex to a putative damaged site, the DNA wraps around one UvrB monomer. DNA wrap is dependent on ATP binding by UvrB and probably causes local melting of the DNA helix, facilitating insertion of UvrB beta-hairpin between the DNA strands. Then UvrB probes one DNA strand for the presence of a lesion. If a lesion is found the UvrA subunits dissociate and the UvrB-DNA preincision complex is formed. This complex is subsequently bound by UvrC and the second UvrB is released. If no lesion is found, the DNA wraps around the other UvrB subunit that will check the other stand for damage. This is UvrABC system protein B from Bacillus anthracis.